Reading from the N-terminus, the 184-residue chain is RNA polymerase sigma factor HrpL (184 aa).

The short motif at 49-62 (DILQCVFLEALRNE) is the Polymerase core binding element. Positions 151–170 (YQETANTLGVPIGTVRSRLS) form a DNA-binding region, H-T-H motif.

This sequence belongs to the sigma-70 factor family. ECF subfamily.

In terms of biological role, sigma factors are initiation factors that promote the attachment of RNA polymerase to specific initiation sites and are then released. This sigma factor is involved in the activation of hprD as well as other hrp loci which are involved in plant pathogenicity, hrmA and avr genes. The protein is RNA polymerase sigma factor HrpL (hrpL) of Pseudomonas syringae pv. syringae.